The chain runs to 188 residues: dCTP deaminase (188 aa).

DCTP contacts are provided by residues 111–116, 135–137, Q156, Y170, K179, and Q180; these read KSTYAR and TLE. E137 serves as the catalytic Proton donor/acceptor.

The protein belongs to the dCTP deaminase family. As to quaternary structure, homotrimer.

It catalyses the reaction dCTP + H2O + H(+) = dUTP + NH4(+). The protein operates within pyrimidine metabolism; dUMP biosynthesis; dUMP from dCTP (dUTP route): step 1/2. Its function is as follows. Catalyzes the deamination of dCTP to dUTP. The polypeptide is dCTP deaminase (Rickettsia felis (strain ATCC VR-1525 / URRWXCal2) (Rickettsia azadi)).